The chain runs to 733 residues: Fibronectin type III domain-containing protein 7 (733 aa).

An N-terminal signal peptide occupies residues 1–25; the sequence is MAGGRETCLPLIGFILICLKMVASA. Fibronectin type-III domains lie at 28–115, 116–202, 203–288, 289–373, 374–459, 460–544, 545–632, and 631–715; these read APEI…TVLA, APIL…TSPR, APAN…TVAC, APGR…TAPC, CPSD…TAPC, SPEI…TVPC, CPTG…CCPL, and PLGV…YSVT. An N-linked (GlcNAc...) asparagine glycan is attached at Asn230. N-linked (GlcNAc...) asparagine glycosylation is present at Asn433.

It is found in the secreted. The sequence is that of Fibronectin type III domain-containing protein 7 (FNDC7) from Homo sapiens (Human).